We begin with the raw amino-acid sequence, 67 residues long: Large ribosomal subunit protein uL29 (67 aa).

The protein belongs to the universal ribosomal protein uL29 family.

In Cereibacter sphaeroides (strain ATCC 17025 / ATH 2.4.3) (Rhodobacter sphaeroides), this protein is Large ribosomal subunit protein uL29.